Consider the following 335-residue polypeptide: Glucokinase (335 aa).

11-16 (ADIGGT) contributes to the ATP binding site.

It belongs to the bacterial glucokinase family.

The protein localises to the cytoplasm. The enzyme catalyses D-glucose + ATP = D-glucose 6-phosphate + ADP + H(+). In Xanthomonas campestris pv. campestris (strain B100), this protein is Glucokinase.